A 936-amino-acid chain; its full sequence is Protein translocase subunit SecA (936 aa).

ATP is bound by residues Gln-87, 105–109 (GEGKT), and Asp-515. Positions 920, 922, 931, and 932 each coordinate Zn(2+).

Belongs to the SecA family. Monomer and homodimer. Part of the essential Sec protein translocation apparatus which comprises SecA, SecYEG and auxiliary proteins SecDF-YajC and YidC. The cofactor is Zn(2+).

It localises to the cell inner membrane. The protein localises to the cytoplasm. The enzyme catalyses ATP + H2O + cellular proteinSide 1 = ADP + phosphate + cellular proteinSide 2.. In terms of biological role, part of the Sec protein translocase complex. Interacts with the SecYEG preprotein conducting channel. Has a central role in coupling the hydrolysis of ATP to the transfer of proteins into and across the cell membrane, serving both as a receptor for the preprotein-SecB complex and as an ATP-driven molecular motor driving the stepwise translocation of polypeptide chains across the membrane. This chain is Protein translocase subunit SecA, found in Paraburkholderia phymatum (strain DSM 17167 / CIP 108236 / LMG 21445 / STM815) (Burkholderia phymatum).